The following is a 76-amino-acid chain: RNA-binding protein KhpA (76 aa).

Residues 30–76 (GEVLEVRVNPEDLGRVIGRSGRTAKALRTLVTALADGRRVRVDVVDD) form the KH domain.

Belongs to the KhpA RNA-binding protein family.

The protein localises to the cytoplasm. In terms of biological role, a probable RNA-binding protein. The sequence is that of RNA-binding protein KhpA from Leifsonia xyli subsp. xyli (strain CTCB07).